Here is a 692-residue protein sequence, read N- to C-terminus: Polyribonucleotide nucleotidyltransferase (692 aa).

The Mg(2+) site is built by aspartate 484 and aspartate 490. The 60-residue stretch at 551 to 610 folds into the KH domain; that stretch reads PRIITIQINPDRIRDVIGPGGKVIRALTEETGATIDIQDNGTVTIASVDGEAGAAAKRRI. An S1 motif domain is found at 620–688; it reads DTIYDGKVAK…RQGKIKLSMK (69 aa).

The protein belongs to the polyribonucleotide nucleotidyltransferase family. In terms of assembly, component of the RNA degradosome, which is a multiprotein complex involved in RNA processing and mRNA degradation. Mg(2+) serves as cofactor.

It is found in the cytoplasm. It carries out the reaction RNA(n+1) + phosphate = RNA(n) + a ribonucleoside 5'-diphosphate. Involved in mRNA degradation. Catalyzes the phosphorolysis of single-stranded polyribonucleotides processively in the 3'- to 5'-direction. In Acidithiobacillus ferrooxidans (strain ATCC 53993 / BNL-5-31) (Leptospirillum ferrooxidans (ATCC 53993)), this protein is Polyribonucleotide nucleotidyltransferase.